Here is a 158-residue protein sequence, read N- to C-terminus: MVELLGIIRIRGWAKAPWYINETLEMLRLRYNFNTMMYPKTSQILGMLNKVSPYVTWGEIDPDTLKLLIIKRLETAKGDKVSDSYVKEVLKIENIDTMVKQLYEGKIYLHKLDQYFKLPIRLHPPKGGFKGSVKRPYKNKGEFGYRGDKINELMRRMM.

The protein belongs to the universal ribosomal protein uL30 family. As to quaternary structure, part of the 50S ribosomal subunit.

The chain is Large ribosomal subunit protein uL30 from Saccharolobus islandicus (strain Y.N.15.51 / Yellowstone #2) (Sulfolobus islandicus).